Reading from the N-terminus, the 297-residue chain is Taste receptor type 2 member 4 (297 aa).

The Extracellular segment spans residues 1-11; the sequence is MLWELYVFVFA. The helical transmembrane segment at 12 to 32 threads the bilayer; it reads ASVFLNFVGIIANLFIIVIII. Residues 33–46 are Cytoplasmic-facing; the sequence is KTWVNSRRIASPDR. Residues 47–67 traverse the membrane as a helical segment; the sequence is ILFSLAITRFLTLGLFLLNSV. Topologically, residues 68–80 are extracellular; the sequence is YIATNTGRSVYFS. Residues 81–101 traverse the membrane as a helical segment; sequence TFFLLCWKFLDANSLWLVTIL. Residues 102–128 are Cytoplasmic-facing; that stretch reads NSLYCVKITNFQHPVFLLLKRTISMKT. Residues 129–149 traverse the membrane as a helical segment; it reads TSLLLACLLISALTTLLYYML. The Extracellular portion of the chain corresponds to 150 to 171; that stretch reads SQISRFPEHIIGRNDTSFDLSD. N-linked (GlcNAc...) asparagine glycosylation is present at N163. The chain crosses the membrane as a helical span at residues 172–192; sequence GILTLVASLVLNSLLQFMLNV. The Cytoplasmic segment spans residues 193-229; that stretch reads TFASLLIHSLRRHIQKMQRNRTSFWNPQTEAHMGAMR. Residues 230–250 traverse the membrane as a helical segment; sequence LMICFLVLYIPYSIATLLYLP. The Extracellular portion of the chain corresponds to 251–260; that stretch reads SYMRKNLRAQ. Residues 261-281 form a helical membrane-spanning segment; sequence AICMIITAAYPPGHSVLLIIT. Topologically, residues 282 to 297 are cytoplasmic; sequence HHKLKAKAKKIFCFYK.

The protein belongs to the G-protein coupled receptor T2R family. Expressed in subsets of taste receptor cells of the tongue and palate epithelium and exclusively in gustducin-positive cells. Expressed in 15% taste bud cells in circumvallate and foliate papillae but only in 2% in fungiform papillae.

The protein resides in the membrane. It is found in the cell projection. Its subcellular location is the cilium membrane. Functionally, gustducin-coupled receptor for denatonium and N(6)-propyl-2-thiouracil implicated in the perception of bitter compounds in the oral cavity and the gastrointestinal tract. Signals through PLCB2 and the calcium-regulated cation channel TRPM5. In airway epithelial cells, binding of denatonium increases the intracellular calcium ion concentration and stimulates ciliary beat frequency. The polypeptide is Taste receptor type 2 member 4 (Tas2r4) (Mus musculus (Mouse)).